Here is a 326-residue protein sequence, read N- to C-terminus: tRNA uridine(34) hydroxylase (326 aa).

Positions 123–217 constitute a Rhodanese domain; the sequence is SDPEVLLIDT…YLEEVKPEES (95 aa). The active-site Cysteine persulfide intermediate is the Cys177. The segment at 293 to 326 is disordered; that stretch reads KSRGESHIGSDVKQVIEARRQDKVERKQRQHQEG.

The protein belongs to the TrhO family.

The enzyme catalyses uridine(34) in tRNA + AH2 + O2 = 5-hydroxyuridine(34) in tRNA + A + H2O. Functionally, catalyzes oxygen-dependent 5-hydroxyuridine (ho5U) modification at position 34 in tRNAs. The sequence is that of tRNA uridine(34) hydroxylase from Shewanella loihica (strain ATCC BAA-1088 / PV-4).